The sequence spans 217 residues: Response regulator RR06 (217 aa).

Positions 2–115 (NILVADDEEM…LLVKRIKALI (114 aa)) constitute a Response regulatory domain. Position 51 is a 4-aspartylphosphate (Asp51). The segment at residues 122 to 217 (EDIWRYQDVT…VKNVGYKISL (96 aa)) is a DNA-binding region (ompR/PhoB-type).

In terms of processing, phosphorylated at threonine residues by StkP; threonine phosphorylation enhances RR06 binding to DNA and may also increase expression of CbpA. May be de-phosphorylated by PhpP.

Functionally, member of the two-component regulatory system HK06/RR06 involved in regulation of target genes, including choline-binding protein CbpA. Binds to the promoter region of CbpA and directly activates transcription. The chain is Response regulator RR06 from Streptococcus pneumoniae serotype 2 (strain D39 / NCTC 7466).